We begin with the raw amino-acid sequence, 89 residues long: Myrmicitoxin(1)-Pr2a (89 aa).

An N-terminal signal peptide occupies residues 1–23 (MEIPKLLYIAVIAIGLSGSLTCA). A propeptide spanning residues 24–61 (TPLANPWADPEAEANPEAKAIAEATAEAIAEALAEPEP) is cleaved from the precursor. Asn88 is modified (asparagine amide).

Belongs to the formicidae venom clade 1 family. In terms of tissue distribution, expressed by the venom gland.

It is found in the secreted. In terms of biological role, vertebrate-selective toxin that causes pain by targeting voltage-gated sodium channels. This Pogonomyrmex rugosus (Desert harvester ant) protein is Myrmicitoxin(1)-Pr2a.